A 356-amino-acid polypeptide reads, in one-letter code: Outer membrane protein Omp38 (356 aa).

The N-terminal stretch at 1-19 (MKLSRIALATMLVAAPLAA) is a signal peptide. The 119-residue stretch at 221-339 (ELTEDLNMEL…RVFATITGSR (119 aa)) folds into the OmpA-like domain. Residues N237, D271, T273, N279, and R286 each coordinate meso-2,6-diaminopimelate.

This sequence belongs to the outer membrane OOP (TC 1.B.6) superfamily. Homotrimer. Forms a pore with a size of 1.3 nm.

Its subcellular location is the cell outer membrane. It is found in the host mitochondrion. Functionally, functions as a porin. Induces apoptosis in human cell lines through caspase-dependent and AIF-dependent pathways. Purified Omp38 enters host cell and localizes to the mitochondria, which presumably leads to a release of proapoptotic molecules such as cytochrome c and AIF (apoptosis-inducing factor). Binds peptidoglycan, contributes to cell wall maintenance. This is Outer membrane protein Omp38 from Acinetobacter baumannii (strain ATCC 19606 / DSM 30007 / JCM 6841 / CCUG 19606 / CIP 70.34 / NBRC 109757 / NCIMB 12457 / NCTC 12156 / 81).